Consider the following 686-residue polypeptide: Bromodomain-containing factor 1 (686 aa).

2 disordered regions span residues 1-69 (MTDI…PAGL) and 85-150 (NGYN…NPIP). Residues 9 to 25 (NDVDVNGNNVNDDVSSN) are compositionally biased toward low complexity. Residues 99–120 (QGLKKEEGGQGTKQEDLDENSK) show a composition bias toward basic and acidic residues. Residues 130–139 (EPAPAPPPEP) show a composition bias toward pro residues. The 110-residue stretch at 145–254 (PQNPIPKHQQ…ASFEKHMLNM (110 aa)) folds into the Bromo 1 domain. A Phosphoserine modification is found at Ser-270. Residues 283–304 (QTHNGRPKRTIHPPKSKDIYPY) form a disordered region. Basic residues predominate over residues 287–296 (GRPKRTIHPP). The Bromo 2 domain occupies 312–421 (KRLQQAMKFC…EVFNSKWADR (110 aa)). Disordered regions lie at residues 424 to 447 (LDDY…SEYS), 486 to 523 (IRKE…KKNK), 594 to 636 (SSGA…EQSR), and 649 to 686 (DSAS…SEEE). Ser-429 carries the phosphoserine modification. Residues 438–447 (DYDDYESEYS) are compositionally biased toward acidic residues. A coiled-coil region spans residues 460-499 (AIQYLEEQLARMKVELQQLKKQELEKIRKERRLARGSKKR). Residues 488–507 (KERRLARGSKKRGKRSKGRS) show a composition bias toward basic residues. The 81-residue stretch at 518–598 (RDKKNKLKTV…RQYESSSGAS (81 aa)) folds into the NET domain. Composition is skewed to polar residues over residues 594–620 (SSGA…TSAG) and 652–671 (SPLS…HNGF). Phosphoserine is present on residues Ser-615 and Ser-659. A compositionally biased stretch (acidic residues) spans 675-686 (SDDDVSSESEEE).

The protein belongs to the BET family. Interacts with the TFIID subunit TAF7 and with acetylated histones H3 and H4. In terms of processing, phosphorylated by the casein kinase CK2 complex.

Its subcellular location is the nucleus. Transcription factor involved in the expression of a broad class of genes including snRNAs. Required for sporulation and DNA-damage repair. Prevents the spreading of SIR silencing at telomeres and protects histone H4, but not H3, from deacetylation. This Saccharomyces cerevisiae (strain ATCC 204508 / S288c) (Baker's yeast) protein is Bromodomain-containing factor 1 (BDF1).